A 455-amino-acid chain; its full sequence is Tumor necrosis factor receptor superfamily member 1A (455 aa).

Residues 1 to 29 (MGLSTVPDLLLPLVLLELLVGIYPSGVIG) form the signal peptide. The Extracellular segment spans residues 30-211 (LVPHLGDREK…VKGTEDSGTT (182 aa)). 4 TNFR-Cys repeats span residues 43 to 82 (VCPQGKYIHPQNNSICCTKCHKGTYLYNDCPGPGQDTDCR), 83 to 125 (ECES…DTVC), 126 to 166 (GCRK…NTVC), and 167 to 196 (TCHAGFFLRENECVSCSNCKKSLECTKLCL). 7 disulfide bridges follow: Cys44/Cys58, Cys59/Cys72, Cys62/Cys81, Cys84/Cys99, Cys102/Cys117, Cys105/Cys125, and Cys127/Cys143. A glycan (N-linked (GlcNAc...) asparagine) is linked at Asn54. N-linked (GlcNAc...) asparagine glycosylation is found at Asn145 and Asn151. 5 disulfide bridges follow: Cys146–Cys158, Cys149–Cys166, Cys168–Cys179, Cys182–Cys195, and Cys185–Cys191. The chain crosses the membrane as a helical span at residues 212–232 (VLLPLVIFFGLCLLSLLFIGL). Residues 233–455 (MYRYQRWKSK…ALPPAPSLLR (223 aa)) lie on the Cytoplasmic side of the membrane. The segment at 254–273 (EKEGELEGTTTKPLAPNPSF) is disordered. The segment at 338–348 (LQKWEDSAHKP) is N-SMase activation domain (NSD). One can recognise a Death domain in the interval 356 to 441 (PATLYAVVEN…GCLEDIEEAL (86 aa)). Arg376 carries a (Microbial infection) N-beta-linked (GlcNAc) arginine glycan.

In terms of assembly, binding of TNF to the extracellular domain leads to homotrimerization. The aggregated death domains provide a novel molecular interface that interacts specifically with the death domain of TRADD. Various TRADD-interacting proteins such as TRAFS, RIPK1 and possibly FADD, are recruited to the complex by their association with TRADD. This complex activates at least two distinct signaling cascades, apoptosis and NF-kappa-B signaling. Interacts with BAG4, BABAM2, FEM1B, GRB2, SQSTM1 and TRPC4AP. Interacts directly with NOL3 (via CARD domain); inhibits TNF-signaling pathway. Interacts with SH3RF2, TRADD and RIPK1. SH3RF2 facilitates the recruitment of RIPK1 and TRADD to TNFRSF1A in a TNF-alpha-dependent process. Interacts with PGLYRP1; this interaction is important for cell death induction. Interacts (via death domain) with MADD (via death domain). (Microbial infection) Interacts with mumps virus protein SH; this interaction inhibits downstream NF-kappa-B pathway activation. As to quaternary structure, (Microbial infection) Interacts with HCV core protein. In terms of assembly, (Microbial infection) Interacts with human cytomegalovirus/HHV-5 protein UL138. (Microbial infection) Interacts with host TNFRSF1A; this interaction leads to the stimulation of both surface expression and shedding of TNFRSF1A. The soluble form is produced from the membrane form by proteolytic processing. Post-translationally, (Microbial infection) Glycosylated at Arg-376 by enteropathogenic E.coli protein NleB1 and S.typhimurium protein Ssek3: arginine GlcNAcylation prevents homotypic/heterotypic death domain interactions.

Its subcellular location is the cell membrane. The protein resides in the golgi apparatus membrane. The protein localises to the secreted. Functionally, receptor for TNFSF2/TNF-alpha and homotrimeric TNFSF1/lymphotoxin-alpha. The adapter molecule FADD recruits caspase-8 to the activated receptor. The resulting death-inducing signaling complex (DISC) performs caspase-8 proteolytic activation which initiates the subsequent cascade of caspases (aspartate-specific cysteine proteases) mediating apoptosis. Contributes to the induction of non-cytocidal TNF effects including anti-viral state and activation of the acid sphingomyelinase. The sequence is that of Tumor necrosis factor receptor superfamily member 1A (TNFRSF1A) from Homo sapiens (Human).